We begin with the raw amino-acid sequence, 287 residues long: Cysteine-rich repeat secretory protein 59 (287 aa).

The first 26 residues, M1–A26, serve as a signal peptide directing secretion. Gnk2-homologous domains follow at residues H32–F134 and K140–S250. N-linked (GlcNAc...) asparagine glycosylation is found at N43, N47, N63, N72, N93, N103, N111, and N212.

It belongs to the cysteine-rich repeat secretory protein family.

It localises to the secreted. The sequence is that of Cysteine-rich repeat secretory protein 59 (CRRSP59) from Arabidopsis thaliana (Mouse-ear cress).